We begin with the raw amino-acid sequence, 253 residues long: Trypsin delta (253 aa).

A signal peptide spans 1-22 (MLKFVILLSAVACALGGTVPEG). Residues 23 to 30 (LLPQLDGR) constitute a propeptide, activation peptide. A Peptidase S1 domain is found at 31-253 (IVGGSATTIS…ALRSWVISNA (223 aa)). Cysteine 56 and cysteine 72 form a disulfide bridge. Active-site charge relay system residues include histidine 71 and aspartate 116. 2 disulfides stabilise this stretch: cysteine 180/cysteine 197 and cysteine 206/cysteine 230. The Charge relay system role is filled by serine 210.

This sequence belongs to the peptidase S1 family.

Its subcellular location is the secreted. The protein localises to the extracellular space. The catalysed reaction is Preferential cleavage: Arg-|-Xaa, Lys-|-Xaa.. This Drosophila melanogaster (Fruit fly) protein is Trypsin delta.